The sequence spans 116 residues: S-adenosylmethionine decarboxylase proenzyme (116 aa).

Catalysis depends on S62, which acts as the Schiff-base intermediate with substrate; via pyruvic acid. S62 carries the post-translational modification Pyruvic acid (Ser); by autocatalysis. The active-site Proton acceptor; for processing activity is H67. The active-site Proton donor; for catalytic activity is the C82.

The protein belongs to the prokaryotic AdoMetDC family. Type 1 subfamily. Heterotetramer of two alpha and two beta chains arranged as a dimer of alpha/beta heterodimers. It depends on pyruvate as a cofactor. Is synthesized initially as an inactive proenzyme. Formation of the active enzyme involves a self-maturation process in which the active site pyruvoyl group is generated from an internal serine residue via an autocatalytic post-translational modification. Two non-identical subunits are generated from the proenzyme in this reaction, and the pyruvate is formed at the N-terminus of the alpha chain, which is derived from the carboxyl end of the proenzyme. The post-translation cleavage follows an unusual pathway, termed non-hydrolytic serinolysis, in which the side chain hydroxyl group of the serine supplies its oxygen atom to form the C-terminus of the beta chain, while the remainder of the serine residue undergoes an oxidative deamination to produce ammonia and the pyruvoyl group blocking the N-terminus of the alpha chain.

The catalysed reaction is S-adenosyl-L-methionine + H(+) = S-adenosyl 3-(methylsulfanyl)propylamine + CO2. It participates in amine and polyamine biosynthesis; S-adenosylmethioninamine biosynthesis; S-adenosylmethioninamine from S-adenosyl-L-methionine: step 1/1. Functionally, catalyzes the decarboxylation of S-adenosylmethionine to S-adenosylmethioninamine (dcAdoMet), the propylamine donor required for the synthesis of the polyamines spermine and spermidine from the diamine putrescine. This Thermomicrobium roseum (strain ATCC 27502 / DSM 5159 / P-2) protein is S-adenosylmethionine decarboxylase proenzyme.